We begin with the raw amino-acid sequence, 91 residues long: CRISPR-associated endoribonuclease Cas2 2 (91 aa).

Residue aspartate 8 participates in Mg(2+) binding.

Belongs to the CRISPR-associated endoribonuclease Cas2 protein family. Homodimer, forms a heterotetramer with a Cas1 homodimer. Requires Mg(2+) as cofactor.

Its function is as follows. CRISPR (clustered regularly interspaced short palindromic repeat), is an adaptive immune system that provides protection against mobile genetic elements (viruses, transposable elements and conjugative plasmids). CRISPR clusters contain sequences complementary to antecedent mobile elements and target invading nucleic acids. CRISPR clusters are transcribed and processed into CRISPR RNA (crRNA). Functions as a ssRNA-specific endoribonuclease. Involved in the integration of spacer DNA into the CRISPR cassette. The polypeptide is CRISPR-associated endoribonuclease Cas2 2 (Pyrobaculum aerophilum (strain ATCC 51768 / DSM 7523 / JCM 9630 / CIP 104966 / NBRC 100827 / IM2)).